The sequence spans 271 residues: uncharacterized protein (271 aa).

Helical transmembrane passes span 30–50 (IWFPIVVGIIASAVGMFGMLL), 189–209 (ALAAVIEELLVNIATAIYFLI), and 218–238 (FLVTVGSSLTYLSNIPMIFAC).

The protein resides in the cell membrane. This is an uncharacterized protein from Aquifex aeolicus (strain VF5).